The sequence spans 85 residues: Small ribosomal subunit protein uS17 (85 aa).

This sequence belongs to the universal ribosomal protein uS17 family. Part of the 30S ribosomal subunit.

In terms of biological role, one of the primary rRNA binding proteins, it binds specifically to the 5'-end of 16S ribosomal RNA. This is Small ribosomal subunit protein uS17 from Geobacter metallireducens (strain ATCC 53774 / DSM 7210 / GS-15).